A 334-amino-acid polypeptide reads, in one-letter code: NADH-ubiquinone oxidoreductase chain 1 (334 aa).

9 helical membrane-spanning segments follow: residues 4 to 24 (FVFL…IIVI), 82 to 102 (FIYV…WGVI), 115 to 135 (IGIL…LMSG), 161 to 181 (IGLI…TEIV), 187 to 207 (GIWF…SALA), 222 to 242 (ELVS…FFLA), 247 to 267 (IILM…SPIV), 268 to 288 (FFKG…LLFI), and 311 to 331 (LPLS…LNGL).

It belongs to the complex I subunit 1 family.

Its subcellular location is the mitochondrion inner membrane. The enzyme catalyses a ubiquinone + NADH + 5 H(+)(in) = a ubiquinol + NAD(+) + 4 H(+)(out). In terms of biological role, core subunit of the mitochondrial membrane respiratory chain NADH dehydrogenase (Complex I) that is believed to belong to the minimal assembly required for catalysis. Complex I functions in the transfer of electrons from NADH to the respiratory chain. The immediate electron acceptor for the enzyme is believed to be ubiquinone. The chain is NADH-ubiquinone oxidoreductase chain 1 (ND1) from Metridium senile (Brown sea anemone).